A 437-amino-acid polypeptide reads, in one-letter code: Photosystem II stability/assembly factor HCF136, chloroplastic (437 aa).

This sequence belongs to the Ycf48 family.

The protein resides in the plastid. It localises to the chloroplast thylakoid membrane. Its function is as follows. Essential for photosystem II (PSII) biogenesis; required for assembly of an early intermediate in PSII assembly that includes D2 (psbD) and cytochrome b559. In Cyanidioschyzon merolae (strain NIES-3377 / 10D) (Unicellular red alga), this protein is Photosystem II stability/assembly factor HCF136, chloroplastic.